Reading from the N-terminus, the 131-residue chain is MYPENYEKFEKIIERLREFKGVIIVEGKRDEDSLRKLGVQTEILRLSRSSLADVALLASEHEEVMILTDFDETGEKLAKRLYDLLVGLTKVDMETRRELQFIASKDAKGIEDLYDLWESLRLRFWAPKEGD.

The Toprim domain maps to 20-103; sequence KGVIIVEGKR…ETRRELQFIA (84 aa). Mg(2+) is bound by residues E26, D69, and D71.

The protein belongs to the UPF0292 family. The cofactor is Mg(2+).

This Pyrococcus furiosus (strain ATCC 43587 / DSM 3638 / JCM 8422 / Vc1) protein is UPF0292 protein PF1724.